The sequence spans 617 residues: Ceramide transfer protein (617 aa).

Positions 1–11 are enriched in polar residues; that stretch reads MSDNQSWNSSG. Residues 1-23 are disordered; sequence MSDNQSWNSSGSEEDLEPESGPP. Residues 23 to 117 enclose the PH domain; it reads PVERCGVLSK…WIDSIEQHKS (95 aa). A coiled-coil region spans residues 268-302; that stretch reads REDSWQKRLDKEIEKRRRVEEAYKNAMTELKKKSH. Residues 320–326 carry the FFAT motif; that stretch reads EFFDAVE. A disordered region spans residues 341–382; that stretch reads EKGRSHWPPSPPSSEAHTAAGSHRLVQAPPSCPPPTDLVSSS. Residues 383–611 form the START domain; the sequence is DEHRFRIQVE…FTSYVQEKTA (229 aa). Glu-466, Gln-487, Asn-524, and Tyr-572 together coordinate an N-acylsphing-4-enine.

The protein resides in the cytoplasm. The protein localises to the golgi apparatus. It is found in the endoplasmic reticulum. It catalyses the reaction N-hexadecanoylsphing-4-enine(in) = N-hexadecanoylsphing-4-enine(out). Functionally, may mediate the intracellular trafficking of ceramide in a non-vesicular manner. The protein is Ceramide transfer protein (cert1) of Xenopus laevis (African clawed frog).